The primary structure comprises 234 residues: Large ribosomal subunit protein uL1 (234 aa).

It belongs to the universal ribosomal protein uL1 family. Part of the 50S ribosomal subunit.

In terms of biological role, binds directly to 23S rRNA. The L1 stalk is quite mobile in the ribosome, and is involved in E site tRNA release. Functionally, protein L1 is also a translational repressor protein, it controls the translation of the L11 operon by binding to its mRNA. This chain is Large ribosomal subunit protein uL1, found in Helicobacter pylori (strain Shi470).